The chain runs to 248 residues: Pyridoxine 5'-phosphate synthase (248 aa).

Residue Asn12 coordinates 3-amino-2-oxopropyl phosphate. 14-15 contacts 1-deoxy-D-xylulose 5-phosphate; it reads DH. Arg23 provides a ligand contact to 3-amino-2-oxopropyl phosphate. His48 acts as the Proton acceptor in catalysis. Residues Arg50 and His55 each contribute to the 1-deoxy-D-xylulose 5-phosphate site. Glu75 functions as the Proton acceptor in the catalytic mechanism. Thr105 serves as a coordination point for 1-deoxy-D-xylulose 5-phosphate. The Proton donor role is filled by His196. 3-amino-2-oxopropyl phosphate contacts are provided by residues Gly197 and 218 to 219; that span reads GH.

It belongs to the PNP synthase family. In terms of assembly, homooctamer; tetramer of dimers.

The protein localises to the cytoplasm. The catalysed reaction is 3-amino-2-oxopropyl phosphate + 1-deoxy-D-xylulose 5-phosphate = pyridoxine 5'-phosphate + phosphate + 2 H2O + H(+). Its pathway is cofactor biosynthesis; pyridoxine 5'-phosphate biosynthesis; pyridoxine 5'-phosphate from D-erythrose 4-phosphate: step 5/5. Catalyzes the complicated ring closure reaction between the two acyclic compounds 1-deoxy-D-xylulose-5-phosphate (DXP) and 3-amino-2-oxopropyl phosphate (1-amino-acetone-3-phosphate or AAP) to form pyridoxine 5'-phosphate (PNP) and inorganic phosphate. The protein is Pyridoxine 5'-phosphate synthase of Pseudomonas aeruginosa (strain LESB58).